We begin with the raw amino-acid sequence, 363 residues long: FMNH(2)-dependent dimethylsulfone monooxygenase (363 aa).

It belongs to the SsuD family.

It catalyses the reaction dimethyl sulfone + FMNH2 + O2 = methanesulfinate + FMN + formaldehyde + H2O + 2 H(+). Involved in the dimethyl sulfide degradation pathway. Catalyzes the oxidation of dimethylsulfone (DMSO2) to yield methanesulfinate, which is oxidized spontaneously to methanesulfonate in the presence of dioxygen and FMNH(2). This is FMNH(2)-dependent dimethylsulfone monooxygenase from Pseudomonas putida (Arthrobacter siderocapsulatus).